We begin with the raw amino-acid sequence, 355 residues long: Hydroxylysine kinase (355 aa).

Residue aspartate 215 is the Proton acceptor of the active site.

The protein belongs to the aminoglycoside phosphotransferase family.

The protein resides in the cytoplasm. It carries out the reaction (5R)-5-hydroxy-L-lysine + GTP = (5R)-5-phosphooxy-L-lysine + GDP + H(+). Its function is as follows. Catalyzes the GTP-dependent phosphorylation of 5-hydroxy-L-lysine. The sequence is that of Hydroxylysine kinase (hykk) from Danio rerio (Zebrafish).